Here is a 25-residue protein sequence, read N- to C-terminus: Ocellatin-L1 (25 aa).

L25 bears the Leucine amide mark.

This sequence belongs to the frog skin active peptide (FSAP) family. Ocellatin subfamily. In terms of tissue distribution, expressed by the skin glands.

Its subcellular location is the secreted. Antimicrobial peptide with activity against Gram-negative bacteria but without activity against Gram-positive bacteria. Shows a low activity in stimulating insulin release from rat BRIN-BD11 beta cells, and acts without loss of integrity of the plasma membrane. Has very low hemolytic activity. Shows weak amphipathicity in its alpha-helical conformation. This is Ocellatin-L1 from Leptodactylus laticeps (Santa Fe frog).